Here is a 118-residue protein sequence, read N- to C-terminus: Large ribosomal subunit protein bL20 (118 aa).

This sequence belongs to the bacterial ribosomal protein bL20 family.

Binds directly to 23S ribosomal RNA and is necessary for the in vitro assembly process of the 50S ribosomal subunit. It is not involved in the protein synthesizing functions of that subunit. This is Large ribosomal subunit protein bL20 from Lachnoclostridium phytofermentans (strain ATCC 700394 / DSM 18823 / ISDg) (Clostridium phytofermentans).